A 608-amino-acid polypeptide reads, in one-letter code: Glutamine--fructose-6-phosphate aminotransferase [isomerizing] (608 aa).

Cysteine 2 (nucleophile; for GATase activity) is an active-site residue. Residues 2-217 (CGIVGYIGKK…DNEFVLMTKD (216 aa)) enclose the Glutamine amidotransferase type-2 domain. 2 SIS domains span residues 284 to 424 (ISKE…EKGT) and 453 to 598 (IMKK…VDKP). Catalysis depends on lysine 603, which acts as the For Fru-6P isomerization activity.

As to quaternary structure, homodimer.

It is found in the cytoplasm. The enzyme catalyses D-fructose 6-phosphate + L-glutamine = D-glucosamine 6-phosphate + L-glutamate. In terms of biological role, catalyzes the first step in hexosamine metabolism, converting fructose-6P into glucosamine-6P using glutamine as a nitrogen source. This Clostridium tetani (strain Massachusetts / E88) protein is Glutamine--fructose-6-phosphate aminotransferase [isomerizing].